The sequence spans 232 residues: Esterase YpfH (232 aa).

Catalysis depends on charge relay system residues Ser-111, Asp-159, and His-191.

It belongs to the AB hydrolase superfamily. AB hydrolase 2 family.

Functionally, displays esterase activity toward palmitoyl-CoA and pNP-butyrate. This Escherichia coli (strain K12) protein is Esterase YpfH (ypfH).